A 183-amino-acid chain; its full sequence is Peptidoglycan recognition protein 1 (183 aa).

A signal peptide spans 1-17; sequence MLFAWAPFPALLGLADS. Intrachain disulfides connect Cys-18-Cys-142, Cys-34-Cys-79, and Cys-55-Cys-61. The region spanning 40 to 168 is the N-acetylmuramoyl-L-alanine amidase domain; the sequence is KPVRYVVISH…RDVQSTLSPG (129 aa).

This sequence belongs to the N-acetylmuramoyl-L-alanine amidase 2 family. As to expression, expressed in all regions of the brain.

The protein localises to the secreted. It localises to the cytoplasmic granule. Functionally, innate immunity protein that plays several important functions in antimicrobial and antitumor defense systems. Acts as a pattern receptor that binds to murein peptidoglycans (PGN) of Gram-positive bacteria and thus provides bactericidal activity. Forms an equimolar complex with heat shock protein HSPA1A and induces programmed cell death through apoptosis and necroptosis in tumor cell lines by activating the TNFR1 receptor on the target cell membrane. In addition, acts in complex with the Ca(2+)-binding protein S100A4 as a chemoattractant able to induce lymphocyte movement. Mechanistically, this complex acts as a ligand of the chemotactic receptors CCR5 and CXCR3 which are present on the cells of the immune system. Promotes also the activation of lymphocytes that become able to kill virus-infected cells as well as tumor cells by modulating the spectrum of their target-cell specificity. Induction of cytotoxicity on monocyte surface requires interaction with TREM1 receptor. In Rattus norvegicus (Rat), this protein is Peptidoglycan recognition protein 1 (Pglyrp1).